The following is a 150-amino-acid chain: Macrodomain Ter protein (150 aa).

This sequence belongs to the MatP family. In terms of assembly, homodimer.

The protein localises to the cytoplasm. Functionally, required for spatial organization of the terminus region of the chromosome (Ter macrodomain) during the cell cycle. Prevents early segregation of duplicated Ter macrodomains during cell division. Binds specifically to matS, which is a 13 bp signature motif repeated within the Ter macrodomain. This chain is Macrodomain Ter protein, found in Escherichia coli O8 (strain IAI1).